Reading from the N-terminus, the 239-residue chain is Ribosomal RNA small subunit methyltransferase G (239 aa).

S-adenosyl-L-methionine is bound by residues Gly77, Phe82, 128 to 129 (AE), and Arg147.

Belongs to the methyltransferase superfamily. RNA methyltransferase RsmG family.

The protein localises to the cytoplasm. Its function is as follows. Specifically methylates the N7 position of guanine in position 535 of 16S rRNA. The chain is Ribosomal RNA small subunit methyltransferase G from Bacillus cereus (strain ZK / E33L).